A 580-amino-acid polypeptide reads, in one-letter code: Anaphase-promoting complex subunit 7 (580 aa).

TPR repeat units follow at residues 50–83, 107–140, 141–175, 253–286, 321–354, 356–388, 390–421, 422–456, 458–490, and 491–523; these read IISF…LFKV, YELK…SRGL, DTHL…CPLC, VLEK…DPYY, AETW…KESH, FAHS…SKNI, TARE…SPDY, SKTM…SPHC, DTVL…QETD, and LMHT…NPQY. Positions 539–580 are disordered; it reads GIDPDQELDQENDDDDQEEGEGENDQEENDDDDNDDDDEYIS. The segment covering 542–580 has biased composition (acidic residues); it reads PDQELDQENDDDDQEEGEGENDQEENDDDDNDDDDEYIS.

The protein belongs to the APC7 family. In terms of assembly, the APC/C is composed of at least 13 subunits that stay tightly associated throughout the cell cycle: anapc1, anapc2, anapc3, anapc4, anapc5, anapc6, anapc7, anapc8, anapc10, anapc11, cdc20, cdc26 and cdh1.

The protein localises to the nucleus. The protein operates within protein modification; protein ubiquitination. Functionally, component of the anaphase promoting complex/cyclosome (APC/C), a cell cycle-regulated E3 ubiquitin-protein ligase complex that controls progression through mitosis and the G1 phase of the cell cycle. This Dictyostelium discoideum (Social amoeba) protein is Anaphase-promoting complex subunit 7 (anapc7).